The primary structure comprises 901 residues: Protein translocase subunit SecA (901 aa).

ATP-binding positions include glutamine 85, 103–107 (GEGKT), and aspartate 510. Residues 848-901 (RINQNNLPVDENSQTTQNSETEDYSDRRIGRNEPCPCGSGKKYKHCHGSRVARQ) are disordered. Positions 849-866 (INQNNLPVDENSQTTQNS) are enriched in polar residues. Residues cysteine 882, cysteine 884, cysteine 893, and histidine 894 each coordinate Zn(2+). Positions 888 to 901 (KKYKHCHGSRVARQ) are enriched in basic residues.

The protein belongs to the SecA family. As to quaternary structure, monomer and homodimer. Part of the essential Sec protein translocation apparatus which comprises SecA, SecYEG and auxiliary proteins SecDF-YajC and YidC. The cofactor is Zn(2+).

The protein localises to the cell inner membrane. The protein resides in the cytoplasm. The enzyme catalyses ATP + H2O + cellular proteinSide 1 = ADP + phosphate + cellular proteinSide 2.. Part of the Sec protein translocase complex. Interacts with the SecYEG preprotein conducting channel. Has a central role in coupling the hydrolysis of ATP to the transfer of proteins into and across the cell membrane, serving both as a receptor for the preprotein-SecB complex and as an ATP-driven molecular motor driving the stepwise translocation of polypeptide chains across the membrane. This is Protein translocase subunit SecA from Haemophilus influenzae (strain 86-028NP).